The chain runs to 207 residues: Putative 3-methyladenine DNA glycosylase (207 aa).

This sequence belongs to the DNA glycosylase MPG family.

The chain is Putative 3-methyladenine DNA glycosylase from Koribacter versatilis (strain Ellin345).